The chain runs to 94 residues: UPF0337 protein NE2439 (94 aa).

The interval 74-94 (KNVGEAVSSRQKSVKKRSLYT) is disordered. Basic residues predominate over residues 85–94 (KSVKKRSLYT).

The protein belongs to the UPF0337 (CsbD) family.

This Nitrosomonas europaea (strain ATCC 19718 / CIP 103999 / KCTC 2705 / NBRC 14298) protein is UPF0337 protein NE2439.